Consider the following 326-residue polypeptide: Zinc finger protein 830 (326 aa).

Over residues 1-11 (MAASRKGKAVK) the composition is skewed to basic residues. The disordered stretch occupies residues 1-37 (MAASRKGKAVKAVKQEDLRRLMQETRRDSGRQKRVES). A compositionally biased stretch (basic and acidic residues) spans 13–36 (VKQEDLRRLMQETRRDSGRQKRVE). Residues 50-72 (CALCDAPVKNALLWQTHVLGKQH) form a C2H2-type zinc finger. A compositionally biased stretch (low complexity) spans 83 to 108 (TAPAHTPAPAHTPAHTPAAASSSSST). Disordered regions lie at residues 83-214 (TAPA…PVRD), 237-257 (EMRQ…EEGR), and 276-309 (EELR…EEEE). Positions 180-195 (HSGSVSKAEQQESQEP) are enriched in polar residues. Residues 224–295 (KDQLEREWEE…RSRRRSQRRE (72 aa)) are a coiled coil. Positions 276–286 (EELRAKQETAR) are enriched in basic and acidic residues. Acidic residues predominate over residues 298 to 309 (PMQEEEPLEEEE).

It localises to the nucleus. The protein resides in the chromosome. The protein localises to the nucleus speckle. Functionally, may act as an important regulator of the cell cycle that participates in the maintenance of genome integrity. The polypeptide is Zinc finger protein 830 (Danio rerio (Zebrafish)).